The chain runs to 143 residues: Putative phosphotransferase IIA component SgcA (143 aa).

The 143-residue stretch at 1-143 (MINDIKWVQA…DDALFALVSG (143 aa)) folds into the PTS EIIA type-2 domain. His-63 (tele-phosphohistidine intermediate) is an active-site residue.

Its subcellular location is the cytoplasm. Functionally, the phosphoenolpyruvate-dependent sugar phosphotransferase system (sugar PTS), a major carbohydrate active -transport system, catalyzes the phosphorylation of incoming sugar substrates concomitantly with their translocation across the cell membrane. The protein is Putative phosphotransferase IIA component SgcA (sgcA) of Escherichia coli (strain K12).